The primary structure comprises 436 residues: 23S rRNA (uracil(1939)-C(5))-methyltransferase RlmD (436 aa).

One can recognise a TRAM domain in the interval 10–68 (KQKTTQKIVAEIQDLDYQGLGVAKIQGKTWFIENALPTEKVEAVVTDEKRQYGLATAQK). [4Fe-4S] cluster-binding residues include Cys81, Cys87, Cys90, and Cys168. S-adenosyl-L-methionine is bound by residues Gln270, Phe299, Asn304, Glu320, Asp347, and Asp368. Catalysis depends on Cys394, which acts as the Nucleophile.

This sequence belongs to the class I-like SAM-binding methyltransferase superfamily. RNA M5U methyltransferase family. RlmD subfamily.

It carries out the reaction uridine(1939) in 23S rRNA + S-adenosyl-L-methionine = 5-methyluridine(1939) in 23S rRNA + S-adenosyl-L-homocysteine + H(+). Functionally, catalyzes the formation of 5-methyl-uridine at position 1939 (m5U1939) in 23S rRNA. This is 23S rRNA (uracil(1939)-C(5))-methyltransferase RlmD from Haemophilus parainfluenzae (strain T3T1).